Here is a 113-residue protein sequence, read N- to C-terminus: Large ribosomal subunit protein uL22 (113 aa).

This sequence belongs to the universal ribosomal protein uL22 family. Part of the 50S ribosomal subunit.

Its function is as follows. This protein binds specifically to 23S rRNA; its binding is stimulated by other ribosomal proteins, e.g. L4, L17, and L20. It is important during the early stages of 50S assembly. It makes multiple contacts with different domains of the 23S rRNA in the assembled 50S subunit and ribosome. The globular domain of the protein is located near the polypeptide exit tunnel on the outside of the subunit, while an extended beta-hairpin is found that lines the wall of the exit tunnel in the center of the 70S ribosome. This chain is Large ribosomal subunit protein uL22, found in Carboxydothermus hydrogenoformans (strain ATCC BAA-161 / DSM 6008 / Z-2901).